The chain runs to 172 residues: Centrin-2 (172 aa).

Positions 1-30 (MASNFKKANMASSSQRKRMSPKPELTEEQK) are disordered. Alanine 2 carries the N-acetylalanine modification. The interval 2–25 (ASNFKKANMASSSQRKRMSPKPEL) is required for self-assembly. Serine 20 carries the phosphoserine modification. Lysine 22 participates in a covalent cross-link: Glycyl lysine isopeptide (Lys-Gly) (interchain with G-Cter in SUMO2). Threonine 26 carries the post-translational modification Phosphothreonine. EF-hand domains follow at residues 28-63 (EQKQ…LGFE), 64-99 (PKKE…KMSE), 101-136 (DTKE…LGEN), and 137-172 (LTDE…TSLY). Positions 41, 43, 45, 47, and 52 each coordinate Ca(2+). Residues aspartate 150, aspartate 152, aspartate 154, glutamate 156, and glutamate 161 each coordinate Ca(2+).

The protein belongs to the centrin family. In terms of assembly, monomer. Homooligomer. Interacts with SFI1. Interacts with CCP110. Component of the XPC complex composed of XPC, RAD23B and CETN2. Component of the nuclear pore complex (NPC)-associated TREX-2 complex (transcription and export complex 2), composed of at least GANP, 2 copies of ENY2, PCID2, SEM1/DSS1, and either centrin CETN2 or centrin CETN3. The TREX-2 complex also associates with ALYREF/ALY and with the nucleoporin NUP153. Interacts with USP49. Forms a microtubule-associated complex with POC5, POC1B and FAM161A. Interacts with CCDC15.

It localises to the cytoplasm. It is found in the cytoskeleton. The protein localises to the microtubule organizing center. Its subcellular location is the centrosome. The protein resides in the centriole. It localises to the nucleus envelope. It is found in the nucleus. The protein localises to the nuclear pore complex. Its function is as follows. Plays a fundamental role in microtubule organizing center structure and function. Required for centriole duplication and correct spindle formation. Has a role in regulating cytokinesis and genome stability via cooperation with CALM1 and CCP110. Involved in global genome nucleotide excision repair (GG-NER) by acting as component of the XPC complex. Cooperatively with RAD23B appears to stabilize XPC. In vitro, stimulates DNA binding of the XPC:RAD23B dimer. In terms of biological role, the XPC complex is proposed to represent the first factor bound at the sites of DNA damage and together with other core recognition factors, XPA, RPA and the TFIIH complex, is part of the pre-incision (or initial recognition) complex. The XPC complex recognizes a wide spectrum of damaged DNA characterized by distortions of the DNA helix such as single-stranded loops, mismatched bubbles or single-stranded overhangs. The orientation of XPC complex binding appears to be crucial for inducing a productive NER. XPC complex is proposed to recognize and to interact with unpaired bases on the undamaged DNA strand which is followed by recruitment of the TFIIH complex and subsequent scanning for lesions in the opposite strand in a 5'-to-3' direction by the NER machinery. Cyclobutane pyrimidine dimers (CPDs) which are formed upon UV-induced DNA damage esacpe detection by the XPC complex due to a low degree of structural perurbation. Instead they are detected by the UV-DDB complex which in turn recruits and cooperates with the XPC complex in the respective DNA repair. Functionally, as a component of the TREX-2 complex, involved in the export of mRNAs to the cytoplasm through the nuclear pores. This chain is Centrin-2 (CETN2), found in Homo sapiens (Human).